The following is a 392-amino-acid chain: Galactokinase (392 aa).

Alpha-D-galactose-binding residues include Arg-37, Glu-43, His-44, and Asp-46. The ATP site is built by Gly-136, Gly-138, Ser-140, and Ser-141. Asp-186 is a binding site for alpha-D-galactose. Residue Asp-186 is the Proton acceptor of the active site. Ser-230 carries the post-translational modification Phosphoserine. Position 236 (Tyr-236) interacts with alpha-D-galactose.

Belongs to the GHMP kinase family. GalK subfamily. In terms of assembly, homodimer.

The catalysed reaction is alpha-D-galactose + ATP = alpha-D-galactose 1-phosphate + ADP + H(+). The protein operates within carbohydrate metabolism; galactose metabolism. In terms of biological role, catalyzes the transfer of a phosphate from ATP to alpha-D-galactose and participates in the first committed step in the catabolism of galactose. The polypeptide is Galactokinase (Galk1) (Mus musculus (Mouse)).